A 484-amino-acid chain; its full sequence is Glutamyl-tRNA(Gln) amidotransferase subunit A (484 aa).

Active-site charge relay system residues include Lys-76 and Ser-151. Ser-175 serves as the catalytic Acyl-ester intermediate.

It belongs to the amidase family. GatA subfamily. In terms of assembly, heterotrimer of A, B and C subunits.

The catalysed reaction is L-glutamyl-tRNA(Gln) + L-glutamine + ATP + H2O = L-glutaminyl-tRNA(Gln) + L-glutamate + ADP + phosphate + H(+). Allows the formation of correctly charged Gln-tRNA(Gln) through the transamidation of misacylated Glu-tRNA(Gln) in organisms which lack glutaminyl-tRNA synthetase. The reaction takes place in the presence of glutamine and ATP through an activated gamma-phospho-Glu-tRNA(Gln). The polypeptide is Glutamyl-tRNA(Gln) amidotransferase subunit A (Thioalkalivibrio sulfidiphilus (strain HL-EbGR7)).